The primary structure comprises 870 residues: Pre-mRNA-processing factor 40 homolog B (870 aa).

WW domains follow at residues 92–125 (GPPR…KPSV) and 133–166 (LLSQ…RPKD). The disordered stretch occupies residues 146–277 (TGKPYYYNNQ…RSGLSWSNRE (132 aa)). Lysine 148 carries the post-translational modification N6-acetyllysine. Residue lysine 175 forms a Glycyl lysine isopeptide (Lys-Gly) (interchain with G-Cter in SUMO2) linkage. Positions 182 to 191 (QQTQQLQTLQ) are enriched in low complexity. Positions 192–211 (PQPPQPQPDPPPIPPGPIPV) are enriched in pro residues. FF domains follow at residues 276-330 (REKA…YKAQ), 340-397 (RLRA…VLFF), 410-470 (RRRN…HIRA), 490-550 (QRKN…YVEE), 554-610 (RFHD…LLEK), and 625-682 (RMRR…FLQV). The stretch at 604-640 (FNSLLEKAEARETEREKEEARRMRRREAAFRSMLRQA) forms a coiled coil. The interval 690–870 (HLHTKGRKHG…TLLQQLDDHQ (181 aa)) is disordered. Residues 691–711 (LHTKGRKHGRKGKKHHRKRSH) are compositionally biased toward basic residues. Composition is skewed to low complexity over residues 739–756 (SESG…ESGG) and 764–774 (SPSSHLLLGSD). Phosphoserine is present on serine 764. Residues 778–794 (RKTKKPKKKTKKRRHKS) show a composition bias toward basic residues. A compositionally biased stretch (basic and acidic residues) spans 804 to 824 (EDKAGKESEDREQEQDREPRQ). Residue serine 831 is modified to Phosphoserine. Residue lysine 837 forms a Glycyl lysine isopeptide (Lys-Gly) (interchain with G-Cter in SUMO2) linkage. Serine 851 carries the post-translational modification Phosphoserine.

This sequence belongs to the PRPF40 family. Interacts with the N-terminus of HD.

It is found in the nucleus speckle. Functionally, may be involved in pre-mRNA splicing. This chain is Pre-mRNA-processing factor 40 homolog B (Prpf40b), found in Mus musculus (Mouse).